The primary structure comprises 199 residues: Mediator of RNA polymerase II transcription subunit 29 (199 aa).

The segment covering methionine 1–valine 17 has biased composition (low complexity). Residues methionine 1–glutamine 47 form a disordered region. Alanine 2 is modified (N-acetylalanine). The segment covering serine 18–glycine 27 has biased composition (gly residues). Residues proline 28–glutamine 47 are compositionally biased toward low complexity.

Belongs to the Mediator complex subunit 29 family. As to quaternary structure, component of the Mediator complex, which is composed of MED1, MED4, MED6, MED7, MED8, MED9, MED10, MED11, MED12, MED13, MED13L, MED14, MED15, MED16, MED17, MED18, MED19, MED20, MED21, MED22, MED23, MED24, MED25, MED26, MED27, MED29, MED30, MED31, CCNC, CDK8 and CDC2L6/CDK11. The MED12, MED13, CCNC and CDK8 subunits form a distinct module termed the CDK8 module. Mediator containing the CDK8 module is less active than Mediator lacking this module in supporting transcriptional activation. Individual preparations of the Mediator complex lacking one or more distinct subunits have been variously termed ARC, CRSP, DRIP, PC2, SMCC and TRAP. Associates with the MED18/MED20 heteromer.

The protein resides in the nucleus. In terms of biological role, component of the Mediator complex, a coactivator involved in the regulated transcription of nearly all RNA polymerase II-dependent genes. Mediator functions as a bridge to convey information from gene-specific regulatory proteins to the basal RNA polymerase II transcription machinery. Mediator is recruited to promoters by direct interactions with regulatory proteins and serves as a scaffold for the assembly of a functional preinitiation complex with RNA polymerase II and the general transcription factors. The sequence is that of Mediator of RNA polymerase II transcription subunit 29 (Med29) from Mus musculus (Mouse).